A 604-amino-acid chain; its full sequence is Glutamine--fructose-6-phosphate aminotransferase [isomerizing] (604 aa).

The Nucleophile; for GATase activity role is filled by Cys-2. Positions 2–218 (CGIVGVVGNT…DKELVIVKKD (217 aa)) constitute a Glutamine amidotransferase type-2 domain. 2 consecutive SIS domains span residues 284 to 423 (IIKS…ANGK) and 456 to 594 (VEQL…VDKP). The For Fru-6P isomerization activity role is filled by Lys-599.

In terms of assembly, homodimer.

It is found in the cytoplasm. It carries out the reaction D-fructose 6-phosphate + L-glutamine = D-glucosamine 6-phosphate + L-glutamate. Catalyzes the first step in hexosamine metabolism, converting fructose-6P into glucosamine-6P using glutamine as a nitrogen source. The protein is Glutamine--fructose-6-phosphate aminotransferase [isomerizing] of Streptococcus agalactiae serotype III (strain NEM316).